The following is a 611-amino-acid chain: Homeobox protein BEL1 homolog (611 aa).

4 disordered regions span residues 63 to 87, 101 to 133, 141 to 160, and 174 to 195; these read QIRM…DQNQ, VNND…NPTS, LRPQ…TQHQ, and SHHQ…FQIG. Over residues 118–133 the composition is skewed to low complexity; sequence PSQGLSLSLSSSNPTS. Low complexity predominate over residues 174–183; it reads SHHQNNNNNN. The tract at residues 197–213 is SR/KY domain; that stretch reads SKYLSPAQELLSEFCSL. Residues 225-263 are disordered; it reads MKHKKKQKGKQQEEWDTSHHSNNDQHDQSATTSSKKHVP. The segment covering 234–251 has biased composition (basic and acidic residues); the sequence is KQQEEWDTSHHSNNDQHD. Residues 269–340 form a BELL domain region; that stretch reads EFMELQKRKA…CLKDGLVGQI (72 aa). The short motif at 275-290 is the Bipartite nuclear localization element; the sequence is KRKAKLLSMLEELKRR. A DNA-binding region (homeobox) is located at residues 391 to 453; sequence PWRPQRGLPE…NARVRLWKPM (63 aa).

Belongs to the TALE/BELL homeobox family. In terms of assembly, may form heterodimeric complexes with TALE/KNOX proteins STM, KNAT1/BP, KNAT2 and KNAT5. Interacts with AG-SEP1 and AG-SEP3 dimers. Interacts with KNATM, isoform KNATM-B. Interacts with BZIP30. In terms of tissue distribution, expressed in both floral and vegetative tissues.

The protein resides in the nucleus. Plays a major role in ovule patterning and in determination of integument identity via its interaction with MADS-box factors. Formation of complex with AG-SEP dimers negatively regulates the carpel identity process and favors the maintenance of ovule identity. BEL1-STM complex maintains the indeterminacy of the inflorescence meristem. Required, with SPL, for cytokinin-induced PIN1 expression in ovules. The protein is Homeobox protein BEL1 homolog (BEL1) of Arabidopsis thaliana (Mouse-ear cress).